The primary structure comprises 430 residues: Enolase (430 aa).

Gln-165 contributes to the (2R)-2-phosphoglycerate binding site. The Proton donor role is filled by Glu-207. Residues Asp-244, Glu-287, and Asp-314 each coordinate Mg(2+). Positions 339, 368, 369, and 390 each coordinate (2R)-2-phosphoglycerate. Lys-339 (proton acceptor) is an active-site residue.

The protein belongs to the enolase family. As to quaternary structure, component of the RNA degradosome, a multiprotein complex involved in RNA processing and mRNA degradation. Mg(2+) is required as a cofactor.

The protein resides in the cytoplasm. It is found in the secreted. It localises to the cell surface. The enzyme catalyses (2R)-2-phosphoglycerate = phosphoenolpyruvate + H2O. The protein operates within carbohydrate degradation; glycolysis; pyruvate from D-glyceraldehyde 3-phosphate: step 4/5. Its function is as follows. Catalyzes the reversible conversion of 2-phosphoglycerate (2-PG) into phosphoenolpyruvate (PEP). It is essential for the degradation of carbohydrates via glycolysis. In Xanthomonas oryzae pv. oryzae (strain MAFF 311018), this protein is Enolase.